The primary structure comprises 462 residues: ATP synthase subunit beta (462 aa).

151 to 158 (GGAGVGKT) serves as a coordination point for ATP.

It belongs to the ATPase alpha/beta chains family. F-type ATPases have 2 components, CF(1) - the catalytic core - and CF(0) - the membrane proton channel. CF(1) has five subunits: alpha(3), beta(3), gamma(1), delta(1), epsilon(1). CF(0) has three main subunits: a(1), b(2) and c(9-12). The alpha and beta chains form an alternating ring which encloses part of the gamma chain. CF(1) is attached to CF(0) by a central stalk formed by the gamma and epsilon chains, while a peripheral stalk is formed by the delta and b chains.

It localises to the cell inner membrane. The enzyme catalyses ATP + H2O + 4 H(+)(in) = ADP + phosphate + 5 H(+)(out). Its function is as follows. Produces ATP from ADP in the presence of a proton gradient across the membrane. The catalytic sites are hosted primarily by the beta subunits. This Chlorobium limicola protein is ATP synthase subunit beta.